The sequence spans 266 residues: Type II pantothenate kinase (266 aa).

ATP is bound at residue 6–13 (DAGGTLIK). The Proton acceptor role is filled by glutamate 70. Residues threonine 99, 121–125 (GGMIQ), tyrosine 137, and serine 225 each bind ATP.

Belongs to the type II pantothenate kinase family. Homodimer.

Its subcellular location is the cytoplasm. It carries out the reaction (R)-pantothenate + ATP = (R)-4'-phosphopantothenate + ADP + H(+). It participates in cofactor biosynthesis; coenzyme A biosynthesis; CoA from (R)-pantothenate: step 1/5. Catalyzes the phosphorylation of pantothenate (Pan), the first step in CoA biosynthesis. The sequence is that of Type II pantothenate kinase from Staphylococcus haemolyticus (strain JCSC1435).